Reading from the N-terminus, the 430-residue chain is MIDSAAPPSGFCRDCLKEQAAHSRRCLACGSPRLLRHSELYRLTLAHIDCDAFYASVEKRDNPELADKPVIIGGGKRGVVSTACYIARIHGVRSAMPMFKALEACPQAVVIKPDMEKYVRVGREVRAMMQELTPLVQPLSIDEAFLDLSGTERLHHDPPARTLARFAKRVEQEIGITVSVGLSYCKFLAKVASDLQKPRGFSVIGQAEAADFLKAKPVTLIWGVGKAFAATLERDGIRAIGQLQTMEEADLMRRYGTMGRRLYRLSRGLDERSVEIDGEAKSVSSETTFNDDLARQEDLVAHLRGLSEQVAFRLRKSALAGQTVVLKLKTADFKTRTRNRRLESPTRLADRIFRTGLQLLEKEVDGTKYRLIGIGVSDLVDPDLADPPDLVDPQASRRAAAEDAINRLRDKFGKTSVETGYTFGKGRRGQ.

Residues 45 to 225 (LAHIDCDAFY…KPVTLIWGVG (181 aa)) enclose the UmuC domain. Positions 49 and 142 each coordinate Mg(2+). The active site involves Glu143.

This sequence belongs to the DNA polymerase type-Y family. As to quaternary structure, monomer. The cofactor is Mg(2+).

The protein localises to the cytoplasm. The catalysed reaction is DNA(n) + a 2'-deoxyribonucleoside 5'-triphosphate = DNA(n+1) + diphosphate. Functionally, poorly processive, error-prone DNA polymerase involved in untargeted mutagenesis. Copies undamaged DNA at stalled replication forks, which arise in vivo from mismatched or misaligned primer ends. These misaligned primers can be extended by PolIV. Exhibits no 3'-5' exonuclease (proofreading) activity. May be involved in translesional synthesis, in conjunction with the beta clamp from PolIII. The protein is DNA polymerase IV 1 (dinB1) of Rhizobium meliloti (strain 1021) (Ensifer meliloti).